Reading from the N-terminus, the 207-residue chain is Cytochrome c biogenesis ATP-binding export protein CcmA (207 aa).

Residues 4–207 (LEARELLCER…RISLTQTGAA (204 aa)) enclose the ABC transporter domain. 36–43 (GSNGAGKT) provides a ligand contact to ATP.

It belongs to the ABC transporter superfamily. CcmA exporter (TC 3.A.1.107) family. As to quaternary structure, the complex is composed of two ATP-binding proteins (CcmA) and two transmembrane proteins (CcmB).

The protein localises to the cell inner membrane. It catalyses the reaction heme b(in) + ATP + H2O = heme b(out) + ADP + phosphate + H(+). Part of the ABC transporter complex CcmAB involved in the biogenesis of c-type cytochromes; once thought to export heme, this seems not to be the case, but its exact role is uncertain. Responsible for energy coupling to the transport system. This chain is Cytochrome c biogenesis ATP-binding export protein CcmA, found in Escherichia coli O6:H1 (strain CFT073 / ATCC 700928 / UPEC).